The chain runs to 156 residues: 3-dehydroquinate dehydratase (156 aa).

Residue Tyr31 is the Proton acceptor of the active site. Asn83, His89, and Asp96 together coordinate substrate. His109 (proton donor) is an active-site residue. Substrate-binding positions include 110-111 and Arg120; that span reads LS.

The protein belongs to the type-II 3-dehydroquinase family. As to quaternary structure, homododecamer.

The enzyme catalyses 3-dehydroquinate = 3-dehydroshikimate + H2O. It functions in the pathway metabolic intermediate biosynthesis; chorismate biosynthesis; chorismate from D-erythrose 4-phosphate and phosphoenolpyruvate: step 3/7. Catalyzes a trans-dehydration via an enolate intermediate. This is 3-dehydroquinate dehydratase from Chromobacterium violaceum (strain ATCC 12472 / DSM 30191 / JCM 1249 / CCUG 213 / NBRC 12614 / NCIMB 9131 / NCTC 9757 / MK).